The chain runs to 436 residues: tRNA-2-methylthio-N(6)-dimethylallyladenosine synthase (436 aa).

The region spanning 5–121 (RKLFIKTYGC…LPDMLERTEG (117 aa)) is the MTTase N-terminal domain. [4Fe-4S] cluster contacts are provided by cysteine 14, cysteine 50, cysteine 84, cysteine 158, cysteine 162, and cysteine 165. Residues 144–373 (ALRGPTAFLT…LGEQQRAAQA (230 aa)) enclose the Radical SAM core domain. The 63-residue stretch at 373–435 (AAMVGRELGV…PNSLAGERIG (63 aa)) folds into the TRAM domain.

It belongs to the methylthiotransferase family. MiaB subfamily. As to quaternary structure, monomer. [4Fe-4S] cluster serves as cofactor.

It is found in the cytoplasm. It catalyses the reaction N(6)-dimethylallyladenosine(37) in tRNA + (sulfur carrier)-SH + AH2 + 2 S-adenosyl-L-methionine = 2-methylsulfanyl-N(6)-dimethylallyladenosine(37) in tRNA + (sulfur carrier)-H + 5'-deoxyadenosine + L-methionine + A + S-adenosyl-L-homocysteine + 2 H(+). Functionally, catalyzes the methylthiolation of N6-(dimethylallyl)adenosine (i(6)A), leading to the formation of 2-methylthio-N6-(dimethylallyl)adenosine (ms(2)i(6)A) at position 37 in tRNAs that read codons beginning with uridine. This is tRNA-2-methylthio-N(6)-dimethylallyladenosine synthase from Cereibacter sphaeroides (strain ATCC 17025 / ATH 2.4.3) (Rhodobacter sphaeroides).